The chain runs to 158 residues: 14-3-3 protein gamma (158 aa).

Residues 1-158 (AAAMKNVTEL…TSDQQDDDGG (158 aa)) form an interaction with SPATA18/MIEAP region. The residue at position 48 (S48) is a Phosphoserine. Y60 is modified (phosphotyrosine). Residue T72 is modified to Phosphothreonine. Phosphoserine is present on S130. Phosphothreonine is present on T149. Phosphoserine is present on S150.

Belongs to the 14-3-3 family. Homodimer. Part of a complex that contains DSG3, PKP1, YAP1 and YWHAG; the complex is required for localization of DSG3 and YAP1 to the cell membrane in keratinocytes. Interacts with SAMSN1. Interacts with RAF1, SSH1 and CRTC2/TORC2. Interacts with ABL1 (phosphorylated form); the interaction retains it in the cytoplasm. Interacts with GAB2. Interacts with MDM4 (phosphorylated); negatively regulates MDM4 activity toward TP53. Interacts with PKA-phosphorylated AANAT and SIRT2. Interacts with the 'Thr-369' phosphorylated form of DAPK2. Interacts with PI4KB, TBC1D22A and TBC1D22B. Interacts with SLITRK1. Interacts with LRRK2; this interaction is dependent on LRRK2 phosphorylation. Interacts with MARK2 and MARK3. Interacts with MEFV. Interacts with ENDOG, TSC2 and PIK3C3; interaction with ENDOG weakens its interaction with TSC2 and PIK3C3. Interacts with (phosphorylated) WDR24. Interacts with BEST1; this interaction promotes L-glutamate channel activity leading to the positive regulation of NMDA glutamate receptor activity through the L-glutamate secretion. Interacts with PKP1 (when phosphorylated); the interaction results in translocation of PKP1 to the cytoplasm and loss of intercellular adhesion in keratinocytes. Interacts with SPATA18/MIEAP; a protein that also plays a role in MALM. Phosphorylated by various PKC isozymes.

It localises to the cytoplasm. The protein localises to the cytosol. It is found in the mitochondrion matrix. Adapter protein implicated in the regulation of a large spectrum of both general and specialized signaling pathways. Binds to a large number of partners, usually by recognition of a phosphoserine or phosphothreonine motif. Binding generally results in the modulation of the activity of the binding partner. Promotes inactivation of WDR24 component of the GATOR2 complex by binding to phosphorylated WDR24. Participates in the positive regulation of NMDA glutamate receptor activity by promoting the L-glutamate secretion through interaction with BEST1. Reduces keratinocyte intercellular adhesion, via interacting with PKP1 and sequestering it in the cytoplasm, thereby reducing its incorporation into desmosomes. Plays a role in mitochondrial protein catabolic process (also named MALM) that promotes the degradation of damaged proteins inside mitochondria. The polypeptide is 14-3-3 protein gamma (Ovis aries (Sheep)).